The following is a 357-amino-acid chain: tRNA N6-adenosine threonylcarbamoyltransferase (357 aa).

His-115 and His-119 together coordinate Fe cation. Substrate-binding positions include 137-141, Asp-170, Gly-183, and Asn-281; that span reads LASGG. Residue Asp-309 participates in Fe cation binding.

The protein belongs to the KAE1 / TsaD family. The cofactor is Fe(2+).

The protein resides in the cytoplasm. The catalysed reaction is L-threonylcarbamoyladenylate + adenosine(37) in tRNA = N(6)-L-threonylcarbamoyladenosine(37) in tRNA + AMP + H(+). Functionally, required for the formation of a threonylcarbamoyl group on adenosine at position 37 (t(6)A37) in tRNAs that read codons beginning with adenine. Is involved in the transfer of the threonylcarbamoyl moiety of threonylcarbamoyl-AMP (TC-AMP) to the N6 group of A37, together with TsaE and TsaB. TsaD likely plays a direct catalytic role in this reaction. This Nitrobacter winogradskyi (strain ATCC 25391 / DSM 10237 / CIP 104748 / NCIMB 11846 / Nb-255) protein is tRNA N6-adenosine threonylcarbamoyltransferase.